Consider the following 80-residue polypeptide: Defensin-like protein 50 (80 aa).

Residues 1 to 27 form the signal peptide; it reads MGFTKIVVTFFLVVMLAVSSSSQNAMA. Disulfide bonds link Cys-39/Cys-79, Cys-43/Cys-66, Cys-52/Cys-77, and Cys-56/Cys-78.

It belongs to the DEFL family.

The protein localises to the secreted. The polypeptide is Defensin-like protein 50 (LCR49) (Arabidopsis thaliana (Mouse-ear cress)).